Here is a 600-residue protein sequence, read N- to C-terminus: Prostaglandin G/H synthase 1 (600 aa).

An N-terminal signal peptide occupies residues 1-24; it reads MSRQSISLRFPLLLLLLSPSPVFS. The region spanning 32 to 70 is the EGF-like domain; sequence PVNPCCYYPCQHQGICVRFGLDRYQCDCTRTGYSGPNCT. 4 cysteine pairs are disulfide-bonded: C36-C47, C37-C159, C41-C57, and C59-C69. N-linked (GlcNAc...) asparagine glycosylation is present at N68. The next 4 membrane-spanning stretches (helical) occupy residues 74-82, 86-92, 97-105, and 108-122; these read IWTWLRTTL, PSFIHFL, RWLWDFVNA, and IRDT…VRSN. N144 carries N-linked (GlcNAc...) asparagine glycosylation. The active-site Proton acceptor is the H207. Y385 functions as the For cyclooxygenase activity in the catalytic mechanism. Position 388 (H388) interacts with heme b. The N-linked (GlcNAc...) asparagine glycan is linked to N410. A disulfide bridge links C569 with C575.

Belongs to the prostaglandin G/H synthase family. In terms of assembly, homodimer. It depends on heme b as a cofactor.

It localises to the endoplasmic reticulum membrane. Its subcellular location is the microsome membrane. It catalyses the reaction (5Z,8Z,11Z,14Z)-eicosatetraenoate + AH2 + 2 O2 = prostaglandin H2 + A + H2O. The enzyme catalyses (5Z,8Z,11Z,14Z)-eicosatetraenoate + 2 O2 = prostaglandin G2. It carries out the reaction prostaglandin G2 + AH2 = prostaglandin H2 + A + H2O. The catalysed reaction is (9Z,12Z)-octadecadienoate + AH2 + O2 = (9R)-hydroxy-(10E,12Z)-octadecadienoate + A + H2O. It catalyses the reaction (9Z,12Z)-octadecadienoate + AH2 + O2 = (9S)-hydroxy-(10E,12Z)-octadecadienoate + A + H2O. The enzyme catalyses (9Z,12Z)-octadecadienoate + AH2 + O2 = (13S)-hydroxy-(9Z,11E)-octadecadienoate + A + H2O. It carries out the reaction (9Z,12Z)-octadecadienoate + AH2 + O2 = (13R)-hydroxy-(9Z,11E)-octadecadienoate + A + H2O. The protein operates within lipid metabolism; prostaglandin biosynthesis. The cyclooxygenase activity is inhibited by nonsteroidal anti-inflammatory drugs (NSAIDs) including ibuprofen, flurbiprofen, ketoprofen, naproxen, flurbiprofen, anirolac, fenclofenac and diclofenac. Dual cyclooxygenase and peroxidase that plays an important role in the biosynthesis pathway of prostanoids, a class of C20 oxylipins mainly derived from arachidonate ((5Z,8Z,11Z,14Z)-eicosatetraenoate, AA, C20:4(n-6)), with a particular role in the inflammatory response. The cyclooxygenase activity oxygenates AA to the hydroperoxy endoperoxide prostaglandin G2 (PGG2), and the peroxidase activity reduces PGG2 to the hydroxy endoperoxide prostaglandin H2 (PGH2), the precursor of all 2-series prostaglandins and thromboxanes. This complex transformation is initiated by abstraction of hydrogen at carbon 13 (with S-stereochemistry), followed by insertion of molecular O2 to form the endoperoxide bridge between carbon 9 and 11 that defines prostaglandins. The insertion of a second molecule of O2 (bis-oxygenase activity) yields a hydroperoxy group in PGG2 that is then reduced to PGH2 by two electrons. Involved in the constitutive production of prostanoids in particular in the stomach and platelets. In gastric epithelial cells, it is a key step in the generation of prostaglandins, such as prostaglandin E2 (PGE2), which plays an important role in cytoprotection. In platelets, it is involved in the generation of thromboxane A2 (TXA2), which promotes platelet activation and aggregation, vasoconstriction and proliferation of vascular smooth muscle cells. Can also use linoleate (LA, (9Z,12Z)-octadecadienoate, C18:2(n-6)) as substrate and produce hydroxyoctadecadienoates (HODEs) in a regio- and stereospecific manner, being (9R)-HODE ((9R)-hydroxy-(10E,12Z)-octadecadienoate) and (13S)-HODE ((13S)-hydroxy-(9Z,11E)-octadecadienoate) its major products. The sequence is that of Prostaglandin G/H synthase 1 (PTGS1) from Ovis aries (Sheep).